The primary structure comprises 949 residues: General transcription factor II-I repeat domain-containing protein 2B (949 aa).

GTF2I-like repeat units lie at residues 98 to 192 (QVHS…QLGG) and 323 to 417 (LSSI…SNVG).

Belongs to the TFII-I family. Ubiquitous.

The protein resides in the nucleus. In Homo sapiens (Human), this protein is General transcription factor II-I repeat domain-containing protein 2B (GTF2IRD2B).